Here is a 325-residue protein sequence, read N- to C-terminus: Alkanal monooxygenase beta chain (325 aa).

The protein belongs to the bacterial luciferase oxidoreductase family. As to quaternary structure, heterodimer of an alpha and a beta chain.

It carries out the reaction a long-chain fatty aldehyde + FMNH2 + O2 = a long-chain fatty acid + hnu + FMN + H2O + 2 H(+). Light-emitting reaction in luminous bacteria. The specific role of the beta subunit is unknown, but it is absolutely required for bioluminescence activity. This Photobacterium leiognathi protein is Alkanal monooxygenase beta chain (luxB).